A 91-amino-acid chain; its full sequence is Small ribosomal subunit protein bS16 (91 aa).

This sequence belongs to the bacterial ribosomal protein bS16 family.

This chain is Small ribosomal subunit protein bS16, found in Exiguobacterium sp. (strain ATCC BAA-1283 / AT1b).